Here is a 209-residue protein sequence, read N- to C-terminus: MATILYIKASPRGERSHSVTVADAFVKAYSEANPGDVVRVLDVFEADLPAFGTDAVVARYLSGQGDPLSPAQEAAWAAVKRQVEDFKTADKYVIALPMWNFSIPWRLKQFFDIIIQPGLTFSYDEQGYHGLVTGRPVLVSYARGGAYPAGTPAEGWDFQKRYLEHILGFIGFTDIRSVVVEPTLAGGPDTAQAKRAEAVEQARRMALEF.

Residues serine 10, 16–18, and 98–101 each bind FMN; these read SHS and MWNF.

The protein belongs to the azoreductase type 1 family. Homodimer. The cofactor is FMN.

It carries out the reaction 2 a quinone + NADH + H(+) = 2 a 1,4-benzosemiquinone + NAD(+). The catalysed reaction is N,N-dimethyl-1,4-phenylenediamine + anthranilate + 2 NAD(+) = 2-(4-dimethylaminophenyl)diazenylbenzoate + 2 NADH + 2 H(+). In terms of biological role, quinone reductase that provides resistance to thiol-specific stress caused by electrophilic quinones. Its function is as follows. Also exhibits azoreductase activity. Catalyzes the reductive cleavage of the azo bond in aromatic azo compounds to the corresponding amines. This is FMN-dependent NADH:quinone oxidoreductase from Nitratidesulfovibrio vulgaris (strain ATCC 29579 / DSM 644 / CCUG 34227 / NCIMB 8303 / VKM B-1760 / Hildenborough) (Desulfovibrio vulgaris).